A 117-amino-acid chain; its full sequence is Large ribosomal subunit protein bL20 (117 aa).

The protein belongs to the bacterial ribosomal protein bL20 family.

Its function is as follows. Binds directly to 23S ribosomal RNA and is necessary for the in vitro assembly process of the 50S ribosomal subunit. It is not involved in the protein synthesizing functions of that subunit. In Oleidesulfovibrio alaskensis (strain ATCC BAA-1058 / DSM 17464 / G20) (Desulfovibrio alaskensis), this protein is Large ribosomal subunit protein bL20.